A 180-amino-acid chain; its full sequence is MTQRLKTVYYETIVPKLKEQFNYTNIHQVPKVIKVTVNRGLGDASQNAKALESSIAELATITGQKPVVTRARKAIAGFKIRKGMPVGVMVTLRSERMYAFLDRLISLALPRIRDFRGISGNSFDGRGNYSLGIREQLIFPEIDYDKIDQIRGMDISIITTAQTDEEGRALLTEMGMPFRK.

Belongs to the universal ribosomal protein uL5 family. Part of the 50S ribosomal subunit; part of the 5S rRNA/L5/L18/L25 subcomplex. Contacts the 5S rRNA and the P site tRNA. Forms a bridge to the 30S subunit in the 70S ribosome.

Functionally, this is one of the proteins that bind and probably mediate the attachment of the 5S RNA into the large ribosomal subunit, where it forms part of the central protuberance. In the 70S ribosome it contacts protein S13 of the 30S subunit (bridge B1b), connecting the 2 subunits; this bridge is implicated in subunit movement. Contacts the P site tRNA; the 5S rRNA and some of its associated proteins might help stabilize positioning of ribosome-bound tRNAs. This Gloeothece citriformis (strain PCC 7424) (Cyanothece sp. (strain PCC 7424)) protein is Large ribosomal subunit protein uL5.